The sequence spans 256 residues: Calsenilin (256 aa).

The interval 1-22 (MQRTKEAMKASDGSLLGDPGRI) is disordered. Residue Ser-14 is modified to Phosphoserine. A Glycyl lysine isopeptide (Lys-Gly) (interchain with G-Cter in SUMO1) cross-link involves residue Lys-26. 2 S-palmitoyl cysteine lipidation sites follow: Cys-45 and Cys-46. A phosphoserine mark is found at Ser-60 and Ser-63. Positions 67-123 (LELSTVRHQPEGLDQLQAQTKFTKKELQSLYRGFKNECPTGLVDEDTFKLIYSQFFP) constitute an EF-hand 1; degenerate domain. Residue Lys-90 forms a Glycyl lysine isopeptide (Lys-Gly) (interchain with G-Cter in SUMO1) linkage. 3 consecutive EF-hand domains span residues 126–161 (DATT…LLRG), 162–197 (TVHE…IYDM), and 210–245 (APLE…DENI). Positions 175, 177, 179, 181, 186, 223, 225, 227, and 234 each coordinate Ca(2+). Residues 243-256 (ENIMSSMQLFENVI) form an interaction with KCND2 region.

Belongs to the recoverin family. In terms of assembly, binds to DNA as a homomultimer. Dimerization is induced by binding to calcium. Interacts with the C-terminus of PSEN1 and PSEN2 and with PSEN2 CTF subunit. Associates with KCN1. Component of heteromultimeric potassium channels. Identified in potassium channel complexes containing KCND1, KCND2, KCND3, KCNIP1, KCNIP2, KCNIP3, KCNIP4, DPP6 and DPP10. Interacts with KCND2 and KCND3. Post-translationally, palmitoylated. Palmitoylation enhances association with the plasma membrane. In terms of processing, proteolytically cleaved by caspase-3. As to expression, detected in brain cortex, thalamus, dentate gyrus and cerebellum (at protein level). Expressed in brain. Colocalizes with KCND2 in excitatory neurons including cortical and hippocampal CA1 pyramidal cells.

It is found in the cytoplasm. Its subcellular location is the cell membrane. It localises to the endoplasmic reticulum. The protein localises to the golgi apparatus. The protein resides in the nucleus. Functionally, calcium-dependent transcriptional repressor that binds to the DRE element of genes including PDYN and FOS. Affinity for DNA is reduced upon binding to calcium and enhanced by binding to magnesium. Seems to be involved in nociception. Its function is as follows. Regulatory subunit of Kv4/D (Shal)-type voltage-gated rapidly inactivating A-type potassium channels, such as KCND2/Kv4.2 and KCND3/Kv4.3. Modulates channel expression at the cell membrane, gating characteristics, inactivation kinetics and rate of recovery from inactivation in a calcium-dependent and isoform-specific manner. In terms of biological role, may play a role in the regulation of PSEN2 proteolytic processing and apoptosis. Together with PSEN2 involved in modulation of amyloid-beta formation. The chain is Calsenilin (Kcnip3) from Rattus norvegicus (Rat).